The chain runs to 124 residues: Large ribosomal subunit protein bL12 (124 aa).

This sequence belongs to the bacterial ribosomal protein bL12 family. In terms of assembly, homodimer. Part of the ribosomal stalk of the 50S ribosomal subunit. Forms a multimeric L10(L12)X complex, where L10 forms an elongated spine to which 2 to 4 L12 dimers bind in a sequential fashion. Binds GTP-bound translation factors.

Its function is as follows. Forms part of the ribosomal stalk which helps the ribosome interact with GTP-bound translation factors. Is thus essential for accurate translation. This Desulfitobacterium hafniense (strain DSM 10664 / DCB-2) protein is Large ribosomal subunit protein bL12.